Consider the following 284-residue polypeptide: Nucleotide-binding protein NMB0738 (284 aa).

G8–S15 serves as a coordination point for ATP. D58 to S61 contributes to the GTP binding site.

This sequence belongs to the RapZ-like family.

Displays ATPase and GTPase activities. This is Nucleotide-binding protein NMB0738 from Neisseria meningitidis serogroup B (strain ATCC BAA-335 / MC58).